Reading from the N-terminus, the 91-residue chain is Probable protein E5A (91 aa).

Belongs to the papillomaviridae E5A protein family.

The polypeptide is Probable protein E5A (Human papillomavirus type 6b).